The primary structure comprises 127 residues: uncharacterized protein (127 aa).

Residues 1-23 (MAGVRARAPLPLALLLSLPAAPG) form the signal peptide. The interval 43 to 127 (CFEVGLRKPP…ACPPRAPLWR (85 aa)) is disordered. Over residues 59-70 (PPSFSSGSSRPL) the composition is skewed to low complexity.

Its subcellular location is the secreted. This is an uncharacterized protein from Homo sapiens (Human).